Reading from the N-terminus, the 156-residue chain is Cytochrome c-type biogenesis protein CcmE 1 (156 aa).

Topologically, residues 1–8 (MNATRKQR) are cytoplasmic. Residues 9–29 (LCLVIGVLAAAALAVTLIVFA) form a helical; Signal-anchor for type II membrane protein membrane-spanning segment. Residues 30–156 (LQRNMSYLFT…ATAAPLTTPR (127 aa)) lie on the Periplasmic side of the membrane. Heme contacts are provided by H123 and Y127.

The protein belongs to the CcmE/CycJ family.

The protein resides in the cell inner membrane. Its function is as follows. Heme chaperone required for the biogenesis of c-type cytochromes. Transiently binds heme delivered by CcmC and transfers the heme to apo-cytochromes in a process facilitated by CcmF and CcmH. This is Cytochrome c-type biogenesis protein CcmE 1 from Xanthomonas oryzae pv. oryzae (strain MAFF 311018).